Reading from the N-terminus, the 500-residue chain is ADP,ATP carrier protein 5 (500 aa).

11 helical membrane-spanning segments follow: residues 26–46, 62–82, 94–114, 149–169, 184–204, 224–244, 287–307, 328–348, 357–377, 381–401, and 469–489; these read LGKF…QNIL, IAGF…VIIY, IFYY…FVIY, YIVY…LLFW, FYTL…FLMM, ITLV…CCLL, LWLL…VEAV, LYIL…NNVM, AVIS…LIVF, ILSL…VSIG, and SISP…IYAV.

Belongs to the ADP/ATP translocase tlc family.

It localises to the cell membrane. Provides the rickettsial cell with host ATP in exchange for rickettsial ADP. This is an obligate exchange system. This energy acquiring activity is an important component of rickettsial parasitism. This chain is ADP,ATP carrier protein 5 (tlcE), found in Rickettsia prowazekii (strain Madrid E).